The following is a 549-amino-acid chain: Glucose-6-phosphate isomerase (549 aa).

Catalysis depends on E355, which acts as the Proton donor. Catalysis depends on residues H386 and K514.

Belongs to the GPI family.

The protein resides in the cytoplasm. The enzyme catalyses alpha-D-glucose 6-phosphate = beta-D-fructose 6-phosphate. The protein operates within carbohydrate biosynthesis; gluconeogenesis. Its pathway is carbohydrate degradation; glycolysis; D-glyceraldehyde 3-phosphate and glycerone phosphate from D-glucose: step 2/4. In terms of biological role, catalyzes the reversible isomerization of glucose-6-phosphate to fructose-6-phosphate. The chain is Glucose-6-phosphate isomerase from Salmonella gallinarum (strain 287/91 / NCTC 13346).